Here is a 330-residue protein sequence, read N- to C-terminus: tRNA pseudouridine synthase B (330 aa).

Asp-42 serves as the catalytic Nucleophile.

It belongs to the pseudouridine synthase TruB family. Type 1 subfamily.

The enzyme catalyses uridine(55) in tRNA = pseudouridine(55) in tRNA. Functionally, responsible for synthesis of pseudouridine from uracil-55 in the psi GC loop of transfer RNAs. The sequence is that of tRNA pseudouridine synthase B from Lactococcus lactis subsp. cremoris (strain SK11).